Here is a 242-residue protein sequence, read N- to C-terminus: Biosynthetic peptidoglycan transglycosylase (242 aa).

Residues 15–35 (FLLLLMVVLAVFWGGGIALFS) form a helical membrane-spanning segment.

This sequence belongs to the glycosyltransferase 51 family.

Its subcellular location is the cell inner membrane. It carries out the reaction [GlcNAc-(1-&gt;4)-Mur2Ac(oyl-L-Ala-gamma-D-Glu-L-Lys-D-Ala-D-Ala)](n)-di-trans,octa-cis-undecaprenyl diphosphate + beta-D-GlcNAc-(1-&gt;4)-Mur2Ac(oyl-L-Ala-gamma-D-Glu-L-Lys-D-Ala-D-Ala)-di-trans,octa-cis-undecaprenyl diphosphate = [GlcNAc-(1-&gt;4)-Mur2Ac(oyl-L-Ala-gamma-D-Glu-L-Lys-D-Ala-D-Ala)](n+1)-di-trans,octa-cis-undecaprenyl diphosphate + di-trans,octa-cis-undecaprenyl diphosphate + H(+). The protein operates within cell wall biogenesis; peptidoglycan biosynthesis. Peptidoglycan polymerase that catalyzes glycan chain elongation from lipid-linked precursors. This chain is Biosynthetic peptidoglycan transglycosylase, found in Shigella sonnei (strain Ss046).